The sequence spans 60 residues: Toxin 5 (60 aa).

4 disulfide bridges follow: cysteine 3-cysteine 22, cysteine 17-cysteine 39, cysteine 41-cysteine 52, and cysteine 53-cysteine 58.

It belongs to the three-finger toxin family. Short-chain subfamily. Type I alpha-neurotoxin sub-subfamily. Expressed by the venom gland.

The protein resides in the secreted. Functionally, binds to muscle nicotinic acetylcholine receptor (nAChR) and inhibit acetylcholine from binding to the receptor, thereby impairing neuromuscular transmission. This Hydrophis schistosus (Beaked sea snake) protein is Toxin 5.